We begin with the raw amino-acid sequence, 97 residues long: UstYa family oxidase VicYc (97 aa).

2 short sequence motifs (HXXHC) span residues 11–15 (HELHC) and 38–42 (HANHC).

The protein belongs to the ustYa family.

The protein operates within mycotoxin biosynthesis. Its function is as follows. UstYa family oxidase, part of the gene cluster that mediates the biosynthesis of the secondary metabolite victorin, the molecular basis for Victoria blight of oats. The role of vicYc within the pathway has still to be determined. The pathway starts with the processing of the precursor vicA1 by several endopeptidases including kexin proteases as well as the cluster-specific S28 family peptidases vicPa and vicPb to produce 7 identical copies of the hexapeptide Gly-Leu-Lys-Leu-Ala-Phe. After being excised from the precursor peptide, the core peptides are cyclized and modified post-translationally by enzymes encoded within the gene cluster. The ustYa family oxidase vicYb is required for the formation of the macrocycle in victorin and the copper amine oxidases (CAOs) vicK1 and vicK2 are responsible for converting victorin to the active form by oxidizing the N-terminal glycyl residue in the peptides to glyoxylate. Relaxed substrate specificity of enzymes in the victorin biosynthetic pathway results in a metabolic grid that produces a set of analogs including victorinines B, C, E or HV-toxin M. In Bipolaris victoriae (strain FI3) (Victoria blight of oats agent), this protein is UstYa family oxidase VicYc.